A 314-amino-acid polypeptide reads, in one-letter code: tRNA N6-adenosine threonylcarbamoyltransferase (314 aa).

His-106, His-110, and Tyr-127 together coordinate Fe cation. Substrate is bound by residues 127–131, Asp-159, Gly-172, Glu-176, and Asn-255; that span reads YVSGA. A Fe cation-binding site is contributed by Asp-283.

It belongs to the KAE1 / TsaD family. The cofactor is Fe(2+).

The protein resides in the cytoplasm. It catalyses the reaction L-threonylcarbamoyladenylate + adenosine(37) in tRNA = N(6)-L-threonylcarbamoyladenosine(37) in tRNA + AMP + H(+). Functionally, required for the formation of a threonylcarbamoyl group on adenosine at position 37 (t(6)A37) in tRNAs that read codons beginning with adenine. Is probably involved in the transfer of the threonylcarbamoyl moiety of threonylcarbamoyl-AMP (TC-AMP) to the N6 group of A37. This chain is tRNA N6-adenosine threonylcarbamoyltransferase, found in Nanoarchaeum equitans (strain Kin4-M).